Reading from the N-terminus, the 92-residue chain is Large ribosomal subunit protein eL43 (92 aa).

Zn(2+) is bound by residues C39, C42, C57, and C60. Residues 39–60 form a C4-type zinc finger; the sequence is CPVCGFPKLKRASTSIWVCGKC.

The protein belongs to the eukaryotic ribosomal protein eL43 family. Putative zinc-binding subfamily. In terms of assembly, part of the 50S ribosomal subunit. It depends on Zn(2+) as a cofactor.

Binds to the 23S rRNA. The chain is Large ribosomal subunit protein eL43 from Methanocaldococcus jannaschii (strain ATCC 43067 / DSM 2661 / JAL-1 / JCM 10045 / NBRC 100440) (Methanococcus jannaschii).